The primary structure comprises 1823 residues: THO complex subunit 2 (1823 aa).

A coiled-coil region spans residues 935–1003 (NRYESEISKQ…RRRLSREKDT (69 aa)). A Nuclear localization signal motif is present at residues 964–969 (KRKKEK). 2 disordered regions span residues 1244-1382 (LVGV…KDLN) and 1394-1823 (ALSS…GSRE). Basic and acidic residues-rich tracts occupy residues 1272–1283 (QMLKTKPLDGRT), 1312–1330 (KSME…DENP), and 1356–1367 (AKQDFGKDDGKS). Polar residues predominate over residues 1394–1409 (ALSSTAANGSIATGSS). Residues 1432–1596 (PRHEIVTSVR…EKSHPDDHFH (165 aa)) show a composition bias toward basic and acidic residues. Residues 1600 to 1610 (LPPPPPLPPNI) are compositionally biased toward pro residues. Composition is skewed to basic and acidic residues over residues 1616–1625 (AAKEDLERRA), 1636–1648 (PRHE…RSEE), 1655–1706 (DDAK…FEAS), and 1768–1785 (LGKE…DPIA). Residues Ser-1646 and Ser-1696 each carry the phosphoserine modification. The segment covering 1802 to 1816 (MTVNGKTTRGEQSGS) has biased composition (polar residues).

The protein belongs to the THOC2 family. In terms of assembly, component of the THO complex, which is composed of THO1, THO2, THO3, THO5, THO6 and THO7.

It localises to the nucleus. In terms of biological role, acts as a component of the THO subcomplex of the TREX complex which is thought to couple mRNA transcription, processing and nuclear export. The sequence is that of THO complex subunit 2 (THO2) from Arabidopsis thaliana (Mouse-ear cress).